An 843-amino-acid polypeptide reads, in one-letter code: MKSPSPVDPESPSSPDCKGGSSSKRRRLPWRMTMSLAYQSLGVVYGDLSTSPLYVYKAAFAEDIQHSETNEEILGVLSFVFWTLTLVPLLKYVCVVLRADDNGEGGTFALYSLLCRHARAALLPPGGGGGGGEPGDEDQFLDAGADKKAAANGNALALSGRGGGGGAAAGVRRLLERHKVLQRVLLVLALVGTCMVIGDGVLTPAISVFSAVSGLELSMEKHQHKYVEVPIACFVLVCLFCLQHYGTHRVGFLFAPIVITWLLCISMIGVYNIVHWEPNVYRALSPYYMYKFLKKTQRGGWMSLGGILLCITGSEAMFADLGHFNQLSIQIAFTCMVYPSLILAYMGQAAYLCKHHIIESDYRIGFYVSVPEKIRWPVLAIAILAAVVGSQAVITGTFSMIKQCTALGCFPRVKIVHTSDKVHGQIYIPEINWILMILCLAITIGFRDTKHLGNASGLAVITVMLVTTCLMSLVIVLCWHKSIFLAFGFIIFFGTIEALYFSASLIKFREGAWVPIVLAFIFMAIMCIWHYGTIKKYEFDLQNKVSINWLLGLSPNLGIVRVRGIGLIHTELDSGIPAIFSHFVTNLPAFHQVLIFLCIKNVPIPHVSPEERFLVGRIGPKEYRIYRCIVRYGYHDVHKDDQEFEKELVCSVAEFIRSGAAAAADAAASSKPKNVCGGGAEESEKEEEERMSVIPSGSIRMMEEDGGAGAPSSEDTVGGSGSGSGRGSSRGGGGAREIMSPSPSPPPVVVAPRKRVRFVLPAASPRPDAGVREELQELMDAREAGMAFILGHSYVKAKSGSSFFRRLVINFCYDFLRRNSRGPNYAVTIPHASTLEVGMIYYV.

Positions 1 to 15 are enriched in low complexity; the sequence is MKSPSPVDPESPSSP. The disordered stretch occupies residues 1-25; it reads MKSPSPVDPESPSSPDCKGGSSSKR. Residues 1 to 34 lie on the Cytoplasmic side of the membrane; it reads MKSPSPVDPESPSSPDCKGGSSSKRRRLPWRMTM. The chain crosses the membrane as a helical span at residues 35-55; that stretch reads SLAYQSLGVVYGDLSTSPLYV. The Vacuolar portion of the chain corresponds to 56–72; sequence YKAAFAEDIQHSETNEE. A helical transmembrane segment spans residues 73–93; sequence ILGVLSFVFWTLTLVPLLKYV. Residues 94 to 183 are Cytoplasmic-facing; sequence CVVLRADDNG…LLERHKVLQR (90 aa). The helical transmembrane segment at 184-204 threads the bilayer; the sequence is VLLVLALVGTCMVIGDGVLTP. The Vacuolar portion of the chain corresponds to 205-225; that stretch reads AISVFSAVSGLELSMEKHQHK. A helical membrane pass occupies residues 226-246; sequence YVEVPIACFVLVCLFCLQHYG. Topologically, residues 247–249 are cytoplasmic; sequence THR. Residues 250–270 form a helical membrane-spanning segment; sequence VGFLFAPIVITWLLCISMIGV. At 271–298 the chain is on the vacuolar side; sequence YNIVHWEPNVYRALSPYYMYKFLKKTQR. Residues 299-319 traverse the membrane as a helical segment; sequence GGWMSLGGILLCITGSEAMFA. Over 320–326 the chain is Cytoplasmic; it reads DLGHFNQ. The chain crosses the membrane as a helical span at residues 327–347; the sequence is LSIQIAFTCMVYPSLILAYMG. The Vacuolar portion of the chain corresponds to 348–377; it reads QAAYLCKHHIIESDYRIGFYVSVPEKIRWP. A helical membrane pass occupies residues 378-398; sequence VLAIAILAAVVGSQAVITGTF. The Cytoplasmic segment spans residues 399–425; the sequence is SMIKQCTALGCFPRVKIVHTSDKVHGQ. A helical transmembrane segment spans residues 426-446; sequence IYIPEINWILMILCLAITIGF. Topologically, residues 447–451 are vacuolar; the sequence is RDTKH. A helical membrane pass occupies residues 452–472; sequence LGNASGLAVITVMLVTTCLMS. Residues 473–482 are Cytoplasmic-facing; it reads LVIVLCWHKS. Residues 483 to 505 traverse the membrane as a helical segment; the sequence is IFLAFGFIIFFGTIEALYFSASL. Residues 506-510 lie on the Vacuolar side of the membrane; it reads IKFRE. Residues 511-531 traverse the membrane as a helical segment; the sequence is GAWVPIVLAFIFMAIMCIWHY. Topologically, residues 532-843 are cytoplasmic; it reads GTIKKYEFDL…TLEVGMIYYV (312 aa). A disordered region spans residues 667–747; sequence AASSKPKNVC…IMSPSPSPPP (81 aa). Over residues 718–735 the composition is skewed to gly residues; the sequence is GGSGSGSGRGSSRGGGGA.

It belongs to the HAK/KUP transporter (TC 2.A.72.3) family. In terms of tissue distribution, expressed in roots, shoots, and panicle at flowering stage.

Its subcellular location is the vacuole membrane. In terms of biological role, high-affinity potassium transporter. This is Potassium transporter 10 (HAK10) from Oryza sativa subsp. japonica (Rice).